Reading from the N-terminus, the 185-residue chain is Transcription antitermination protein NusB (185 aa).

The protein belongs to the NusB family.

Functionally, involved in transcription antitermination. Required for transcription of ribosomal RNA (rRNA) genes. Binds specifically to the boxA antiterminator sequence of the ribosomal RNA (rrn) operons. In Rhodospirillum rubrum (strain ATCC 11170 / ATH 1.1.1 / DSM 467 / LMG 4362 / NCIMB 8255 / S1), this protein is Transcription antitermination protein NusB.